The chain runs to 385 residues: Aspartate carbamoyltransferase 2, chloroplastic (385 aa).

The transit peptide at 1 to 30 directs the protein to the chloroplast; that stretch reads MTASSSLFSCSMHMEVLTPKISKWPKNFVS. Residues R131 and T132 each contribute to the carbamoyl phosphate site. Residues R131 and T132 each contribute to the UMP site. K161 provides a ligand contact to L-aspartate. Carbamoyl phosphate-binding residues include R182, H210, and Q213. 2 residues coordinate UMP: R182 and H210. The UMP site is built by R243 and R305. L-aspartate-binding residues include R243 and R305. Carbamoyl phosphate is bound by residues L345 and P346.

Belongs to the aspartate/ornithine carbamoyltransferase superfamily. ATCase family. In terms of assembly, homotrimer.

Its subcellular location is the plastid. The protein localises to the chloroplast. It catalyses the reaction carbamoyl phosphate + L-aspartate = N-carbamoyl-L-aspartate + phosphate + H(+). Its pathway is pyrimidine metabolism; UMP biosynthesis via de novo pathway; (S)-dihydroorotate from bicarbonate: step 2/3. Its activity is regulated as follows. Feedback inhibited by UMP. Catalyzes the condensation of carbamoyl phosphate and aspartate to form carbamoyl aspartate and inorganic phosphate, the committed step in the de novo pyrimidine nucleotide biosynthesis pathway. In Pisum sativum (Garden pea), this protein is Aspartate carbamoyltransferase 2, chloroplastic (PYRB2).